A 194-amino-acid chain; its full sequence is MLTPHKIINLQNHFLIAMPALQDPLFKQSVVYICEHNDAGAMGIVINKLVTRCTVETILNNLKIVSPTRDPSVRLDNPVFAGGPLLDDRGFILHTPIKGFGSSVNISSKAMITTSKDILETLGTPNQPKDVLVALGYSGWDKGQLEHELMENTWLTAPANETILFHTPIIDRWRAAAKILGIDIYNIADQTGHA.

Belongs to the UPF0301 (AlgH) family.

This is UPF0301 protein BPEN_258 from Blochmanniella pennsylvanica (strain BPEN).